We begin with the raw amino-acid sequence, 402 residues long: Phosphoglycerate kinase (402 aa).

Residues 24–26 (DFN), arginine 40, 63–66 (HFGR), arginine 122, and arginine 155 each bind substrate. ATP is bound by residues lysine 206, glycine 297, glutamate 328, and 357–360 (GGDS).

Belongs to the phosphoglycerate kinase family. As to quaternary structure, monomer.

It localises to the cytoplasm. The enzyme catalyses (2R)-3-phosphoglycerate + ATP = (2R)-3-phospho-glyceroyl phosphate + ADP. The protein operates within carbohydrate degradation; glycolysis; pyruvate from D-glyceraldehyde 3-phosphate: step 2/5. The protein is Phosphoglycerate kinase of Synechococcus sp. (strain RCC307).